The primary structure comprises 601 residues: Potassium voltage-gated channel subfamily A member 5 (601 aa).

The tetramerization domain stretch occupies residues 1–200 (MEIALVPLEN…FYQLGDEAME (200 aa)). Over 1–236 (MEIALVPLEN…LIFEYPESSG (236 aa)) the chain is Cytoplasmic. The tract at residues 19–93 (GGEAGTGCSQ…DEEGEGDPAL (75 aa)) is disordered. Residues 65–74 (RPLPPLPQDP) show a composition bias toward pro residues. Lys210 participates in a covalent cross-link: Glycyl lysine isopeptide (Lys-Gly) (interchain with G-Cter in SUMO). The chain crosses the membrane as a helical span at residues 237–258 (SARGIAIVSVLVILISIITFCL). Residues 259–312 (ETLPEFRDERELLRHPPVPHQPLGPSRGANGSGPLAPPSGPTVAPLLPRTLADP) lie on the Extracellular side of the membrane. Residues 275–297 (PVPHQPLGPSRGANGSGPLAPPS) form a disordered region. Asn288 is a glycosylation site (N-linked (GlcNAc...) asparagine). A helical transmembrane segment spans residues 313–334 (FFIVETTCVIWFTFELLVRFFA). The S-palmitoyl cysteine moiety is linked to residue Cys335. The Cytoplasmic segment spans residues 335–345 (CPSKAEFSRNI). The helical transmembrane segment at 346-366 (MNIIDVVAIFPYFITLGTELA) threads the bilayer. At 367 to 383 (EQPGGGGGGQNGQQAMS) the chain is on the extracellular side. Residues 384-404 (LAILRVIRLVRVFRIFKLSRH) form a helical; Voltage-sensor membrane-spanning segment. Residues 405-419 (SKGLQILGKTLQASM) lie on the Cytoplasmic side of the membrane. The S4-S5 linker stretch occupies residues 406 to 419 (KGLQILGKTLQASM). The helical transmembrane segment at 420 to 441 (RELGLLIFFLFIGVILFSSAVY) threads the bilayer. The Extracellular segment spans residues 442–455 (FAEADNQETHFSSI). Residues 456 to 467 (PDAFWWAVVTMT) constitute an intramembrane region (helical). The Selectivity filter signature appears at 468–473 (TVGYGD). An intramembrane segment occupies 468–475 (TVGYGDMR). Topologically, residues 476 to 482 (PVTVGGK) are extracellular. Residues 483–511 (IVGSLCAIAGVLTIALPVPVIVSNFNYFY) traverse the membrane as a helical segment. Residues 512-601 (HRETDHEEQA…CLDTSRETDL (90 aa)) lie on the Cytoplasmic side of the membrane. The disordered stretch occupies residues 521-545 (AALKEEQGSQSHGTGLDSGGPRKAS). Residue Lys524 forms a Glycyl lysine isopeptide (Lys-Gly) (interchain with G-Cter in SUMO) linkage. The PDZ-binding signature appears at 599 to 601 (TDL).

This sequence belongs to the potassium channel family. A (Shaker) (TC 1.A.1.2) subfamily. Kv1.5/KCNA5 sub-subfamily. In terms of assembly, homotetramer and heterotetramer of potassium channel proteins. Interacts with DLG1, which enhances channel currents. Forms a ternary complex with DLG1 and CAV3. Interacts with KCNAB1. Interacts with UBE2I. Interacts with XIRP2; the interaction is required for normal action potential configuration in the heart. Glycosylated. In terms of processing, sumoylated on Lys-210, and Lys-524, preferentially with SUMO3. Sumoylation regulates the voltage sensitivity of the channel.

The protein resides in the cell membrane. The catalysed reaction is K(+)(in) = K(+)(out). In terms of biological role, voltage-gated potassium channel that mediates transmembrane potassium transport in excitable membranes. Forms tetrameric potassium-selective channels through which potassium ions pass in accordance with their electrochemical gradient. The channel alternates between opened and closed conformations in response to the voltage difference across the membrane. Can form functional homotetrameric channels and heterotetrameric channels that contain variable proportions of KCNA1, KCNA2, KCNA4, KCNA5, and possibly other family members as well; channel properties depend on the type of alpha subunits that are part of the channel. Channel properties are modulated by cytoplasmic beta subunits that regulate the subcellular location of the alpha subunits and promote rapid inactivation. Homotetrameric channels display rapid activation and slow inactivation. Required for normal electrical conduction including formation of the infranodal ventricular conduction system and normal action potential configuration, as a result of its interaction with XIRP2. May play a role in regulating the secretion of insulin in normal pancreatic islets. This Mustela putorius furo (European domestic ferret) protein is Potassium voltage-gated channel subfamily A member 5 (KCNA5).